We begin with the raw amino-acid sequence, 501 residues long: U6 snRNA (guanine-N(2))-methyltransferase THUMPD2 (501 aa).

Residues 149–264 (TEQIQELQET…DVYSVLGIPV (116 aa)) form the THUMP domain. Positions 414–469 (LKGGEASSGPLNSQGGHTEEPGGEERLTPAEKAAVSEPVSSPFAASNQGRLDRMPP) are disordered. Residues 430-442 (HTEEPGGEERLTP) are compositionally biased toward basic and acidic residues.

It belongs to the methyltransferase superfamily. In terms of assembly, part of the heterodimeric THUMPD2-TRM112 methyltransferase complex; this complex forms an active tRNA methyltransferase, where TRMT112 acts as an activator of the catalytic subunit THUMPD2.

It localises to the nucleus. It catalyses the reaction guanosine in U6 snRNA + S-adenosyl-L-methionine = N(2)-methylguanosine in U6 snRNA + S-adenosyl-L-homocysteine + H(+). Its function is as follows. Catalytic subunit of the THUMPD2-TRM112 methyltransferase complex, that specifically mediates the S-adenosyl-L-methionine-dependent N(2)-methylation of guanosine nucleotides, most probably at position 72 (m2G72), in the U6snRNA of the major spliceosome. This modification in the U6 snRNA affects the constitutive splicing efficiency of introns that have suboptimal splice sites and can impact final mRNA levels. The sequence is that of U6 snRNA (guanine-N(2))-methyltransferase THUMPD2 from Bos taurus (Bovine).